We begin with the raw amino-acid sequence, 141 residues long: Lutropin subunit beta (141 aa).

An N-terminal signal peptide occupies residues 1-18; that stretch reads MGTLQGLLLWLLLGTGGA. Intrachain disulfides connect Cys-29–Cys-77, Cys-43–Cys-92, Cys-46–Cys-130, Cys-54–Cys-108, Cys-58–Cys-110, and Cys-113–Cys-120. An N-linked (GlcNAc...) asparagine glycan is attached at Asn-33.

It belongs to the glycoprotein hormones subunit beta family. Heterodimer of a common alpha chain and a unique beta chain which confers biological specificity to thyrotropin, lutropin, follitropin and gonadotropin.

It localises to the secreted. Functionally, promotes spermatogenesis and ovulation by stimulating the testes and ovaries to synthesize steroids. The protein is Lutropin subunit beta (LHB) of Oryctolagus cuniculus (Rabbit).